Reading from the N-terminus, the 215-residue chain is Cytochrome c biogenesis ATP-binding export protein CcmA (215 aa).

The ABC transporter domain occupies 3–211 (LTAENLAARR…KMTGFAGVDR (209 aa)). 35–42 (GRNGSGKS) contacts ATP.

This sequence belongs to the ABC transporter superfamily. CcmA exporter (TC 3.A.1.107) family. As to quaternary structure, the complex is composed of two ATP-binding proteins (CcmA) and two transmembrane proteins (CcmB).

The protein localises to the cell inner membrane. It carries out the reaction heme b(in) + ATP + H2O = heme b(out) + ADP + phosphate + H(+). Its function is as follows. Part of the ABC transporter complex CcmAB involved in the biogenesis of c-type cytochromes; once thought to export heme, this seems not to be the case, but its exact role is uncertain. Responsible for energy coupling to the transport system. The protein is Cytochrome c biogenesis ATP-binding export protein CcmA of Rhizobium etli (strain ATCC 51251 / DSM 11541 / JCM 21823 / NBRC 15573 / CFN 42).